The chain runs to 638 residues: Fructose-1,6-bisphosphatase class 3 (638 aa).

The protein belongs to the FBPase class 3 family. Mn(2+) is required as a cofactor.

The catalysed reaction is beta-D-fructose 1,6-bisphosphate + H2O = beta-D-fructose 6-phosphate + phosphate. Its pathway is carbohydrate biosynthesis; gluconeogenesis. The polypeptide is Fructose-1,6-bisphosphatase class 3 (Pediococcus pentosaceus (strain ATCC 25745 / CCUG 21536 / LMG 10740 / 183-1w)).